A 171-amino-acid chain; its full sequence is S-ribosylhomocysteine lyase (171 aa).

Residues His-54, His-58, and Cys-128 each contribute to the Fe cation site.

Belongs to the LuxS family. In terms of assembly, homodimer. The cofactor is Fe cation.

It catalyses the reaction S-(5-deoxy-D-ribos-5-yl)-L-homocysteine = (S)-4,5-dihydroxypentane-2,3-dione + L-homocysteine. Functionally, involved in the synthesis of autoinducer 2 (AI-2) which is secreted by bacteria and is used to communicate both the cell density and the metabolic potential of the environment. The regulation of gene expression in response to changes in cell density is called quorum sensing. Catalyzes the transformation of S-ribosylhomocysteine (RHC) to homocysteine (HC) and 4,5-dihydroxy-2,3-pentadione (DPD). This Salmonella arizonae (strain ATCC BAA-731 / CDC346-86 / RSK2980) protein is S-ribosylhomocysteine lyase.